The primary structure comprises 608 residues: Albumin (608 aa).

An N-terminal signal peptide occupies residues 1–18; the sequence is MKWVTFLLLLFISGSAFS. Positions 19–24 are excised as a propeptide; the sequence is RGVFRR. Albumin domains lie at 19–211, 212–403, and 404–601; these read RGVF…AVKE, KALV…EFQP, and LVEE…NLVA. Position 27 (His-27) interacts with Cu cation. A Phosphoserine modification is found at Ser-29. Glu-30 and Asp-37 together coordinate Ca(2+). Cysteines 77 and 86 form a disulfide. Position 89 is a phosphoserine (Ser-89). His-91 is a Zn(2+) binding site. Disulfide bonds link Cys-99–Cys-115, Cys-114–Cys-125, Cys-148–Cys-193, Cys-192–Cys-201, Cys-224–Cys-270, and Cys-269–Cys-277. Glu-268 serves as a coordination point for Ca(2+). 2 residues coordinate Zn(2+): His-271 and Asp-273. Residues Asp-273, Glu-276, and Asp-279 each contribute to the Ca(2+) site. Intrachain disulfides connect Cys-289–Cys-303, Cys-302–Cys-313, Cys-340–Cys-385, Cys-384–Cys-393, Cys-416–Cys-462, Cys-461–Cys-472, Cys-485–Cys-501, and Cys-500–Cys-511. The residue at position 297 (Ser-297) is a Phosphoserine. Phosphoserine is present on Ser-443. Thr-444 and Thr-446 each carry phosphothreonine. Lys-460 carries the N6-succinyllysine modification. Ser-513 is subject to Phosphoserine. Disulfide bonds link Cys-538-Cys-583 and Cys-582-Cys-591. An N6-succinyllysine modification is found at Lys-543. Lys-558 carries the post-translational modification N6-methyllysine. Phosphothreonine is present on Thr-570. Position 588 is an N6-succinyllysine (Lys-588).

The protein belongs to the ALB/AFP/VDB family. As to quaternary structure, interacts with FCGRT; this interaction regulates ALB homeostasis. Interacts with TASOR. In plasma, occurs in a covalently-linked complex with chromophore-bound alpha-1-microglobulin; this interaction does not prevent fatty acid binding to ALB. In terms of processing, phosphorylated by FAM20C in the extracellular medium. Plasma.

The protein localises to the secreted. Functionally, binds water, Ca(2+), Na(+), K(+), fatty acids, hormones, bilirubin and drugs. Its main function is the regulation of the colloidal osmotic pressure of blood. Major zinc transporter in plasma, typically binds about 80% of all plasma zinc. Major calcium and magnesium transporter in plasma, binds approximately 45% of circulating calcium and magnesium in plasma. Potentially has more than two calcium-binding sites and might additionally bind calcium in a non-specific manner. The shared binding site between zinc and calcium at residue Asp-273 suggests a crosstalk between zinc and calcium transport in the blood. The rank order of affinity is zinc &gt; calcium &gt; magnesium. Binds to the bacterial siderophore enterobactin and inhibits enterobactin-mediated iron uptake of E.coli from ferric transferrin, and may thereby limit the utilization of iron and growth of enteric bacteria such as E.coli. Does not prevent iron uptake by the bacterial siderophore aerobactin. The sequence is that of Albumin (Alb) from Rattus norvegicus (Rat).